A 113-amino-acid polypeptide reads, in one-letter code: Large ribosomal subunit protein bL17 (113 aa).

The protein belongs to the bacterial ribosomal protein bL17 family. In terms of assembly, part of the 50S ribosomal subunit. Contacts protein L32.

The protein is Large ribosomal subunit protein bL17 of Clostridium beijerinckii (strain ATCC 51743 / NCIMB 8052) (Clostridium acetobutylicum).